The primary structure comprises 258 residues: Small ribosomal subunit protein uS2 (258 aa).

Belongs to the universal ribosomal protein uS2 family.

This Streptococcus suis (strain 05ZYH33) protein is Small ribosomal subunit protein uS2.